The following is a 204-amino-acid chain: Recombination protein RecR (204 aa).

The segment at 63 to 78 (CNRCFNITVEDPCTIC) adopts a C4-type zinc-finger fold. Positions 86–181 (RQVCVVEEPL…RVTRLARGLP (96 aa)) constitute a Toprim domain.

This sequence belongs to the RecR family.

Functionally, may play a role in DNA repair. It seems to be involved in an RecBC-independent recombinational process of DNA repair. It may act with RecF and RecO. This chain is Recombination protein RecR, found in Herpetosiphon aurantiacus (strain ATCC 23779 / DSM 785 / 114-95).